The sequence spans 188 residues: Elongation factor P (188 aa).

The protein belongs to the elongation factor P family.

The protein localises to the cytoplasm. Its pathway is protein biosynthesis; polypeptide chain elongation. Functionally, involved in peptide bond synthesis. Stimulates efficient translation and peptide-bond synthesis on native or reconstituted 70S ribosomes in vitro. Probably functions indirectly by altering the affinity of the ribosome for aminoacyl-tRNA, thus increasing their reactivity as acceptors for peptidyl transferase. This is Elongation factor P from Rickettsia bellii (strain OSU 85-389).